The sequence spans 360 residues: Carbamoyl phosphate synthase small chain (360 aa).

Positions 1–169 (MTKRLLILED…TKTAYPAPGI (169 aa)) are CPSase. Residues Ser-46, Gly-220, and Gly-222 each coordinate L-glutamine. The 187-residue stretch at 172–358 (NIVLVDFGLK…LEMIDSWRCT (187 aa)) folds into the Glutamine amidotransferase type-1 domain. Catalysis depends on Cys-247, which acts as the Nucleophile. Residues Met-248, Gln-251, Asn-289, Gly-291, and Tyr-292 each coordinate L-glutamine. Residues His-331 and Asp-333 contribute to the active site.

Belongs to the CarA family. In terms of assembly, composed of two chains; the small (or glutamine) chain promotes the hydrolysis of glutamine to ammonia, which is used by the large (or ammonia) chain to synthesize carbamoyl phosphate. Tetramer of heterodimers (alpha,beta)4.

The catalysed reaction is hydrogencarbonate + L-glutamine + 2 ATP + H2O = carbamoyl phosphate + L-glutamate + 2 ADP + phosphate + 2 H(+). It carries out the reaction L-glutamine + H2O = L-glutamate + NH4(+). Its pathway is amino-acid biosynthesis; L-arginine biosynthesis; carbamoyl phosphate from bicarbonate: step 1/1. It functions in the pathway pyrimidine metabolism; UMP biosynthesis via de novo pathway; (S)-dihydroorotate from bicarbonate: step 1/3. Its function is as follows. Small subunit of the glutamine-dependent carbamoyl phosphate synthetase (CPSase). CPSase catalyzes the formation of carbamoyl phosphate from the ammonia moiety of glutamine, carbonate, and phosphate donated by ATP, constituting the first step of 2 biosynthetic pathways, one leading to arginine and/or urea and the other to pyrimidine nucleotides. The small subunit (glutamine amidotransferase) binds and cleaves glutamine to supply the large subunit with the substrate ammonia. The polypeptide is Carbamoyl phosphate synthase small chain (Streptococcus pyogenes serotype M18 (strain MGAS8232)).